The sequence spans 393 residues: UDP-glucose 6-dehydrogenase (393 aa).

Residues V11, D31, K36, T85, T120, and E147 each coordinate NAD(+). Residues 143–147 (EFLRE), K199, N203, 244–248 (YNNPS), and G252 contribute to the substrate site. NAD(+) is bound at residue Y254. C255 functions as the Nucleophile in the catalytic mechanism. K258 is an NAD(+) binding site. K309 serves as a coordination point for substrate. R316 is a binding site for NAD(+).

The protein belongs to the UDP-glucose/GDP-mannose dehydrogenase family. In terms of assembly, homodimer.

The catalysed reaction is UDP-alpha-D-glucose + 2 NAD(+) + H2O = UDP-alpha-D-glucuronate + 2 NADH + 3 H(+). It functions in the pathway nucleotide-sugar biosynthesis; UDP-alpha-D-glucuronate biosynthesis; UDP-alpha-D-glucuronate from UDP-alpha-D-glucose: step 1/1. The protein operates within capsule biogenesis; capsule polysaccharide biosynthesis. In terms of biological role, catalyzes the formation of UDP-glucuronic acid which is required for capsular polysaccharide synthesis. Does not catalyze the formation of glucuronamide moiety of the capsular polysaccharide. The sequence is that of UDP-glucose 6-dehydrogenase from Campylobacter jejuni subsp. jejuni serotype O:2 (strain ATCC 700819 / NCTC 11168).